A 247-amino-acid polypeptide reads, in one-letter code: tRNA uridine(34) hydroxylase (247 aa).

Residues 124–218 enclose the Rhodanese domain; sequence TKQNVILIDT…YLEDTHNKNN (95 aa). Cys-178 acts as the Cysteine persulfide intermediate in catalysis.

Belongs to the TrhO family.

It carries out the reaction uridine(34) in tRNA + AH2 + O2 = 5-hydroxyuridine(34) in tRNA + A + H2O. Catalyzes oxygen-dependent 5-hydroxyuridine (ho5U) modification at position 34 in tRNAs. The chain is tRNA uridine(34) hydroxylase from Rickettsia prowazekii (strain Madrid E).